Here is a 185-residue protein sequence, read N- to C-terminus: Peptidoglycan-recognition protein SC1a/b (185 aa).

The N-terminal stretch at 1–21 is a signal peptide; that stretch reads MVSKVALLLAVLVCSQYMAQG. Positions 46 to 170 constitute an N-acetylmuramoyl-L-alanine amidase domain; the sequence is SYAIIHHTAG…RQVSATECPG (125 aa). His-51 serves as a coordination point for Zn(2+). Residues Cys-58 and Cys-64 are joined by a disulfide bond. Zn(2+)-binding residues include His-160 and Cys-168.

This sequence belongs to the N-acetylmuramoyl-L-alanine amidase 2 family. Zn(2+) serves as cofactor.

The protein resides in the secreted. It carries out the reaction Hydrolyzes the link between N-acetylmuramoyl residues and L-amino acid residues in certain cell-wall glycopeptides.. N-acetylmuramyl-L-alanine amidase involved in innate immunity by degrading bacterial peptidoglycans (PGN). Plays a scavenger role by digesting biologically active PGN into biologically inactive fragments. Has no direct bacteriolytic activity. The sequence is that of Peptidoglycan-recognition protein SC1a/b (PGRP-SC1a) from Drosophila simulans (Fruit fly).